Here is an 87-residue protein sequence, read N- to C-terminus: Homeotic protein ultrabithorax (87 aa).

Residues 22–27 carry the Antp-type hexapeptide motif; it reads FYPWMA.

Belongs to the Antp homeobox family. In the embryo, expression is seen in the epidermis, somatic and visceral mesoderm, and the peripheral and central nervous system.

It is found in the nucleus. Sequence-specific transcription factor which is part of a developmental regulatory system that provides cells with specific positional identities on the anterior-posterior axis. Binds the consensus region 5'-TTAAT[GT][GA]-3'. This homeotic protein controls development of the cells in the posterior thoracic and first abdominal segments. It activates the synthesis of the decapentaplegic (DPP) growth factor. This Drosophila hydei (Fruit fly) protein is Homeotic protein ultrabithorax (Ubx).